The primary structure comprises 111 residues: uncharacterized protein (111 aa).

The helical transmembrane segment at 60–80 (TFGRFLAHISCLICILSKRIF) threads the bilayer.

Its subcellular location is the mitochondrion membrane. This is an uncharacterized protein from Arabidopsis thaliana (Mouse-ear cress).